The following is a 103-amino-acid chain: Large ribosomal subunit protein uL23 (103 aa).

It belongs to the universal ribosomal protein uL23 family. Part of the 50S ribosomal subunit. Contacts protein L29, and trigger factor when it is bound to the ribosome.

In terms of biological role, one of the early assembly proteins it binds 23S rRNA. One of the proteins that surrounds the polypeptide exit tunnel on the outside of the ribosome. Forms the main docking site for trigger factor binding to the ribosome. In Chlorobium luteolum (strain DSM 273 / BCRC 81028 / 2530) (Pelodictyon luteolum), this protein is Large ribosomal subunit protein uL23.